Here is a 156-residue protein sequence, read N- to C-terminus: 3-dehydroquinate dehydratase (156 aa).

The Proton acceptor role is filled by Tyr-31. Positions 83, 89, and 96 each coordinate substrate. The active-site Proton donor is His-109. Residues 110–111 (LS) and Arg-120 each bind substrate.

The protein belongs to the type-II 3-dehydroquinase family. In terms of assembly, homododecamer.

It catalyses the reaction 3-dehydroquinate = 3-dehydroshikimate + H2O. Its pathway is metabolic intermediate biosynthesis; chorismate biosynthesis; chorismate from D-erythrose 4-phosphate and phosphoenolpyruvate: step 3/7. Functionally, catalyzes a trans-dehydration via an enolate intermediate. This is 3-dehydroquinate dehydratase from Chromobacterium violaceum (strain ATCC 12472 / DSM 30191 / JCM 1249 / CCUG 213 / NBRC 12614 / NCIMB 9131 / NCTC 9757 / MK).